The primary structure comprises 182 residues: CDP-diacylglycerol--glycerol-3-phosphate 3-phosphatidyltransferase (182 aa).

Over 2–12 (QFNIPTLLTLF) the chain is Cytoplasmic. The chain crosses the membrane as a helical span at residues 13 to 37 (RVILIPFLVVVFYLPFAWAPMVSAL). Topologically, residues 38–60 (IFCIAAITDWFDGFLARRWNQST) are periplasmic. The helical transmembrane segment at 61-81 (RFGAFLDPVADKVLVAIAMVL) threads the bilayer. The Cytoplasmic segment spans residues 82 to 86 (VTEHY). The helical transmembrane segment at 87–107 (HSWWVTLPAATMIAREIIISA) threads the bilayer. Topologically, residues 108–145 (LREWMAELGKRSSVAVSWIGKVKTTAQMVALAWLLWRP) are periplasmic. Residues 146-168 (NIWVEYAGIALFFVAAVLTLWSM) traverse the membrane as a helical segment. Over 169–181 (LQYLSAARGDLLD) the chain is Cytoplasmic.

The protein belongs to the CDP-alcohol phosphatidyltransferase class-I family.

The protein localises to the cell inner membrane. The catalysed reaction is a CDP-1,2-diacyl-sn-glycerol + sn-glycerol 3-phosphate = a 1,2-diacyl-sn-glycero-3-phospho-(1'-sn-glycero-3'-phosphate) + CMP + H(+). It participates in phospholipid metabolism; phosphatidylglycerol biosynthesis; phosphatidylglycerol from CDP-diacylglycerol: step 1/2. Functionally, catalyzes the conversion of cytidine diphosphate diacylglycerol (CDP-DG) and glycerol 3-phosphate into phosphatidylglycerol. Essential for the synthesis of anionic phospholipids, thereby playing a role in balancing the ratio of zwitterionic and anionic phospholipids, which is thought to be important for normal membrane function. This chain is CDP-diacylglycerol--glycerol-3-phosphate 3-phosphatidyltransferase, found in Salmonella choleraesuis (strain SC-B67).